The chain runs to 85 residues: Dual endothelin-1/VEGF signal peptide receptor (85 aa).

Topologically, residues 1–18 (MTMFKGSNEMKSRWNWGS) are extracellular. A helical transmembrane segment spans residues 19-37 (ITCIICFTCVGSQLSMSSS). Residues 38 to 85 (KASNFSGPLQLYQRELEIFIVLTDVPNYRLIKENSHLHTTIVDQGRTV) are Cytoplasmic-facing.

N-glycosylated. As to expression, expressed in kidney. Expressed in endothelial cells.

It localises to the cell membrane. Functionally, dual receptor for both endothelin-1 and the signal sequence of vascular endothelial growth factor A. Does not act as a receptor for angiotensin-2. Does not bind the VEGFA mature protein. May play a role in angiogenesis with a significant role in cardiovascular and neural development. The polypeptide is Dual endothelin-1/VEGF signal peptide receptor (Homo sapiens (Human)).